The chain runs to 48 residues: ATP synthase protein 8 (48 aa).

A helical transmembrane segment spans residues 13–32 (LTYGFLLMITLLILFSQFFL).

The protein belongs to the ATPase protein 8 family. In terms of assembly, F-type ATPases have 2 components, CF(1) - the catalytic core - and CF(0) - the membrane proton channel. In yeast, the dimeric form of ATP synthase consists of 17 polypeptides: alpha, beta, gamma, delta, epsilon, 4 (B), 5 (OSCP), 6 (A), 8, 9 (C), d, E (Tim11), f, g, h, i/j and k.

It is found in the mitochondrion membrane. Functionally, mitochondrial membrane ATP synthase (F(1)F(0) ATP synthase or Complex V) produces ATP from ADP in the presence of a proton gradient across the membrane which is generated by electron transport complexes of the respiratory chain. F-type ATPases consist of two structural domains, F(1) - containing the extramembraneous catalytic core and F(0) - containing the membrane proton channel, linked together by a central stalk and a peripheral stalk. During catalysis, ATP synthesis in the catalytic domain of F(1) is coupled via a rotary mechanism of the central stalk subunits to proton translocation. Part of the complex F(0) domain. Minor subunit located with subunit a in the membrane. The chain is ATP synthase protein 8 (ATP8) from Saccharomyces cerevisiae (strain ATCC 204508 / S288c) (Baker's yeast).